A 593-amino-acid polypeptide reads, in one-letter code: Calnexin (593 aa).

Residues 1–20 (MEGKWLLCMLLVLGTTIVQA) form the signal peptide. The Lumenal segment spans residues 21 to 482 (HEGHDDDMID…QMIEAAEERP (462 aa)). S75 and D118 together coordinate Ca(2+). K138 is subject to N6-acetyllysine. C161 and C195 are oxidised to a cystine. 4 residues coordinate an alpha-D-glucoside: Y165, K167, Y186, and D193. The segment at 261–346 (GNLLNDMTPP…AEKPEDWDED (86 aa)) is disordered. The tract at residues 277 to 410 (IEDPEDQKPE…RKIPNPDFFE (134 aa)) is p domain (Extended arm). A run of 5 repeats spans residues 279–290 (DPEDQKPEDWDE), 296–307 (DPDAVKPDDWNE), 315–326 (DEEATKPDGWLD), 334–345 (DPDAEKPEDWDE), and 349–359 (GEWEAPQIANP). 2 4 X approximate repeats regions span residues 279 to 345 (DPED…DWDE) and 349 to 406 (GEWE…IPNP). Residues 282-320 (DQKPEDWDERPKIPDPDAVKPDDWNEDAPAKIPDEEATK) are compositionally biased toward basic and acidic residues. Residues 324–346 (WLDDEPEYVPDPDAEKPEDWDED) are compositionally biased toward acidic residues. The segment at 327–360 (DEPEYVPDPDAEKPEDWDEDMDGEWEAPQIANPK) is interaction with PPIB. C361 and C367 form a disulfide bridge. 3 repeat units span residues 368–378 (GVWQRPMIDNP), 382–392 (GKWKPPMIDNP), and 396–406 (GIWKPRKIPNP). Position 426 (E426) interacts with an alpha-D-glucoside. Ca(2+) is bound at residue D437. A helical transmembrane segment spans residues 483-503 (WLWVVYVLTVALPVFLVILFC). S-palmitoyl cysteine attachment occurs at residues C503 and C504. At 504 to 593 (CSGKKQSSPV…SPRNRKPRRE (90 aa)) the chain is on the cytoplasmic side. The interval 504-593 (CSGKKQSSPV…SPRNRKPRRE (90 aa)) is sufficient to mediate interaction with SGIP1. A disordered region spans residues 511–593 (SPVEYKKTDA…SPRNRKPRRE (83 aa)). The segment covering 526 to 548 (KEEEEEKEEEKDKGDEEEEGEEK) has biased composition (acidic residues). Residue S555 is modified to Phosphoserine. At T563 the chain carries Phosphothreonine. S565 carries the post-translational modification Phosphoserine; by MAPK3. S584 bears the Phosphoserine mark.

The protein belongs to the calreticulin family. As to quaternary structure, interacts with MAPK3/ERK1. Interacts with KCNH2. Associates with ribosomes. Interacts with SGIP1; involved in negative regulation of endocytosis. The palmitoylated form interacts with the ribosome-translocon complex component SSR1, promoting efficient folding of glycoproteins. Interacts with SERPINA2P/SERPINA2 and with the S and Z variants of SERPINA1. Interacts with PPIB. Interacts with ZNRF4. Interacts with SMIM22. Interacts with TMX2. Interacts with TMEM35A/NACHO and CHRNA7. Interacts with reticulophagy regulators RETREG2 and RETREG3. Interacts with DNM1L; may form part of a larger protein complex at the ER-mitochondrial interface during mitochondrial fission. Interacts with ADAM7. Phosphorylated at Ser-565 by MAPK3/ERK1. Phosphorylation by MAPK3/ERK1 increases its association with ribosomes. Post-translationally, palmitoylation by DHHC6 leads to the preferential localization to the perinuclear rough ER. It mediates the association of calnexin with the ribosome-translocon complex (RTC) which is required for efficient folding of glycosylated proteins. In terms of processing, ubiquitinated, leading to proteasomal degradation. Probably ubiquitinated by ZNRF4.

The protein localises to the endoplasmic reticulum membrane. It is found in the mitochondrion membrane. Its subcellular location is the melanosome membrane. Functionally, calcium-binding protein that interacts with newly synthesized monoglucosylated glycoproteins in the endoplasmic reticulum. It may act in assisting protein assembly and/or in the retention within the ER of unassembled protein subunits. It seems to play a major role in the quality control apparatus of the ER by the retention of incorrectly folded proteins. Associated with partial T-cell antigen receptor complexes that escape the ER of immature thymocytes, it may function as a signaling complex regulating thymocyte maturation. Additionally it may play a role in receptor-mediated endocytosis at the synapse. This is Calnexin (CANX) from Canis lupus familiaris (Dog).